The chain runs to 295 residues: Pyridoxal 5'-phosphate synthase subunit PdxS (295 aa).

D25 lines the D-ribose 5-phosphate pocket. K82 functions as the Schiff-base intermediate with D-ribose 5-phosphate in the catalytic mechanism. Residue G154 coordinates D-ribose 5-phosphate. R166 provides a ligand contact to D-glyceraldehyde 3-phosphate. D-ribose 5-phosphate-binding positions include G215 and 236-237 (GS).

This sequence belongs to the PdxS/SNZ family. As to quaternary structure, in the presence of PdxT, forms a dodecamer of heterodimers.

It catalyses the reaction aldehydo-D-ribose 5-phosphate + D-glyceraldehyde 3-phosphate + L-glutamine = pyridoxal 5'-phosphate + L-glutamate + phosphate + 3 H2O + H(+). Its pathway is cofactor biosynthesis; pyridoxal 5'-phosphate biosynthesis. Functionally, catalyzes the formation of pyridoxal 5'-phosphate from ribose 5-phosphate (RBP), glyceraldehyde 3-phosphate (G3P) and ammonia. The ammonia is provided by the PdxT subunit. Can also use ribulose 5-phosphate and dihydroxyacetone phosphate as substrates, resulting from enzyme-catalyzed isomerization of RBP and G3P, respectively. This Bacillus anthracis (strain A0248) protein is Pyridoxal 5'-phosphate synthase subunit PdxS.